A 30-amino-acid chain; its full sequence is Diuretic hormone 2 (30 aa).

Residue V30 is modified to Valine amide.

It belongs to the sauvagine/corticotropin-releasing factor/urotensin I family.

The protein localises to the secreted. In terms of biological role, regulation of fluid secretion. This is Diuretic hormone 2 from Manduca sexta (Tobacco hawkmoth).